The sequence spans 373 residues: Anhydro-N-acetylmuramic acid kinase (373 aa).

12–19 is an ATP binding site; that stretch reads GTSLDGVD.

Belongs to the anhydro-N-acetylmuramic acid kinase family.

The catalysed reaction is 1,6-anhydro-N-acetyl-beta-muramate + ATP + H2O = N-acetyl-D-muramate 6-phosphate + ADP + H(+). The protein operates within amino-sugar metabolism; 1,6-anhydro-N-acetylmuramate degradation. It functions in the pathway cell wall biogenesis; peptidoglycan recycling. Functionally, catalyzes the specific phosphorylation of 1,6-anhydro-N-acetylmuramic acid (anhMurNAc) with the simultaneous cleavage of the 1,6-anhydro ring, generating MurNAc-6-P. Is required for the utilization of anhMurNAc either imported from the medium or derived from its own cell wall murein, and thus plays a role in cell wall recycling. The chain is Anhydro-N-acetylmuramic acid kinase from Serratia proteamaculans (strain 568).